The chain runs to 510 residues: 2,3-bisphosphoglycerate-independent phosphoglycerate mutase (510 aa).

The Mn(2+) site is built by aspartate 12 and serine 62. Serine 62 serves as the catalytic Phosphoserine intermediate. Substrate contacts are provided by residues histidine 121, 151–152 (RD), arginine 183, arginine 189, 258–261 (RPDR), and lysine 331. Mn(2+) is bound by residues aspartate 398, histidine 402, aspartate 439, histidine 440, and histidine 458.

Belongs to the BPG-independent phosphoglycerate mutase family. In terms of assembly, monomer. It depends on Mn(2+) as a cofactor.

The catalysed reaction is (2R)-2-phosphoglycerate = (2R)-3-phosphoglycerate. It participates in carbohydrate degradation; glycolysis; pyruvate from D-glyceraldehyde 3-phosphate: step 3/5. In terms of biological role, catalyzes the interconversion of 2-phosphoglycerate and 3-phosphoglycerate. The chain is 2,3-bisphosphoglycerate-independent phosphoglycerate mutase from Clostridioides difficile (strain 630) (Peptoclostridium difficile).